Consider the following 372-residue polypeptide: Peptidyl-prolyl cis-trans isomerase D (372 aa).

Residues 9-175 (FFDISIGGKP…KEVKIEDCGV (167 aa)) form the PPIase cyclophilin-type domain. TPR repeat units lie at residues 220–253 (VEAV…LKQY), 271–304 (VSLF…DNTD), and 309–342 (AKAL…QPHD).

Belongs to the cyclophilin-type PPIase family. PPIase D subfamily.

It is found in the cytoplasm. It catalyses the reaction [protein]-peptidylproline (omega=180) = [protein]-peptidylproline (omega=0). Functionally, PPIases accelerate the folding of proteins. It catalyzes the cis-trans isomerization of proline imidic peptide bonds in oligopeptides. In Kluyveromyces lactis (strain ATCC 8585 / CBS 2359 / DSM 70799 / NBRC 1267 / NRRL Y-1140 / WM37) (Yeast), this protein is Peptidyl-prolyl cis-trans isomerase D (CPR6).